The primary structure comprises 440 residues: Trigger factor (440 aa).

Residues 163 to 248 form the PPIase FKBP-type domain; that stretch reads GDTVNIDFDG…INEIKYKNVP (86 aa).

It belongs to the FKBP-type PPIase family. Tig subfamily.

The protein localises to the cytoplasm. It catalyses the reaction [protein]-peptidylproline (omega=180) = [protein]-peptidylproline (omega=0). Functionally, involved in protein export. Acts as a chaperone by maintaining the newly synthesized protein in an open conformation. Functions as a peptidyl-prolyl cis-trans isomerase. This is Trigger factor from Staphylococcus carnosus (strain TM300).